The primary structure comprises 187 residues: Adenylate kinase (187 aa).

10–15 (GSGKGT) is an ATP binding site. The segment at 30 to 59 (STGDLLRAEVAAGSPLGLKAKEVMARGDLV) is NMP. Residues threonine 31, arginine 36, 57-59 (DLV), 85-88 (GYPR), and glutamine 92 each bind AMP. Residues 126 to 136 (GRAKAEGREDD) are LID. Arginine 127 contributes to the ATP binding site. AMP contacts are provided by arginine 133 and arginine 144. Glycine 172 is a binding site for ATP.

The protein belongs to the adenylate kinase family. In terms of assembly, monomer.

The protein resides in the cytoplasm. The enzyme catalyses AMP + ATP = 2 ADP. Its pathway is purine metabolism; AMP biosynthesis via salvage pathway; AMP from ADP: step 1/1. Catalyzes the reversible transfer of the terminal phosphate group between ATP and AMP. Plays an important role in cellular energy homeostasis and in adenine nucleotide metabolism. The protein is Adenylate kinase of Xanthomonas oryzae pv. oryzae (strain MAFF 311018).